The following is a 349-amino-acid chain: Green-sensitive opsin-1 (349 aa).

Over 1–36 (MNGTEGSNFYIPMSNRTGLVRSPYDYTQYYLAEPWK) the chain is Extracellular. N-linked (GlcNAc...) asparagine glycans are attached at residues Asn2 and Asn15. A helical membrane pass occupies residues 37-61 (FKALAFYMFLLIIFGFPINVLTLVV). The Cytoplasmic segment spans residues 62–73 (TAQHKKLRQPLN). The chain crosses the membrane as a helical span at residues 74–99 (YILVNLAFAGTIMVIFGFTVSFYCSL). Residues 100-113 (VGYMALGPLGCVME) lie on the Extracellular side of the membrane. A disulfide bridge links Cys110 with Cys187. The chain crosses the membrane as a helical span at residues 114–133 (GFFATLGGQVALWSLVVLAI). Over 134–152 (ERYIVVCKPMGSFKFSANH) the chain is Cytoplasmic. A helical membrane pass occupies residues 153–176 (AMAGIAFTWFMACSCAVPPLFGWS). At 177 to 202 (RYLPEGMQTSCGPDYYTLNPEYNNES) the chain is on the extracellular side. N-linked (GlcNAc...) asparagine glycosylation occurs at Asn200. A helical transmembrane segment spans residues 203-230 (YVMYMFSCHFCIPVTTIFFTYGSLVCTV). Over 231-252 (KAAAAQQQESESTQKAEREVTR) the chain is Cytoplasmic. Residues 253–276 (MVILMVLGFLFAWVPYASFAAWIF) form a helical membrane-spanning segment. Residues 277 to 284 (FNRGAAFS) are Extracellular-facing. Residues 285 to 309 (AQAMAVPAFFSKTSAVFNPIIYVLL) form a helical membrane-spanning segment. Lys296 bears the N6-(retinylidene)lysine mark. The Cytoplasmic segment spans residues 310 to 349 (NKQFRSCMLNTLFCGKSPLGDDESSSVSTSKTEVSSVSPA). The disordered stretch occupies residues 328–349 (LGDDESSSVSTSKTEVSSVSPA). Residues 334–349 (SSVSTSKTEVSSVSPA) are compositionally biased toward low complexity.

Belongs to the G-protein coupled receptor 1 family. Opsin subfamily. In terms of processing, phosphorylated on some or all of the serine and threonine residues present in the C-terminal region. Retinal double cone accessory photoreceptor cell outer segments.

It localises to the membrane. In terms of biological role, visual pigments are the light-absorbing molecules that mediate vision. They consist of an apoprotein, opsin, covalently linked to cis-retinal. The protein is Green-sensitive opsin-1 (opn1mw1) of Danio rerio (Zebrafish).